Here is a 53-residue protein sequence, read N- to C-terminus: Large ribosomal subunit protein eL40 (53 aa).

Belongs to the eukaryotic ribosomal protein eL40 family.

The protein is Large ribosomal subunit protein eL40 of Staphylothermus marinus (strain ATCC 43588 / DSM 3639 / JCM 9404 / F1).